The following is a 360-amino-acid chain: Photosystem II protein D1 2 (360 aa).

Transmembrane regions (helical) follow at residues 29 to 46, 118 to 133, and 142 to 156; these read YVGWFGVLMIPTLLTATT, HFLIGVFCYMGREWEL, and WICVAFSAPVAAATA. A chlorophyll a-binding site is contributed by H118. Residue Y126 participates in pheophytin a binding. D170 and E189 together coordinate [CaMn4O5] cluster. The chain crosses the membrane as a helical span at residues 197–218; the sequence is FHMLGVAGVFGGSLFSAMHGSL. H198 contacts chlorophyll a. Residues H215 and 264–265 each bind a quinone; that span reads SF. Residue H215 coordinates Fe cation. H272 is a binding site for Fe cation. A helical transmembrane segment spans residues 274–288; that stretch reads FLGAWPVVGIWFTAL. Residues H332, E333, D342, and A344 each contribute to the [CaMn4O5] cluster site. Residues 345 to 360 constitute a propeptide that is removed on maturation; sequence AGEQAPVALQAPAING.

This sequence belongs to the reaction center PufL/M/PsbA/D family. PSII is composed of 1 copy each of membrane proteins PsbA, PsbB, PsbC, PsbD, PsbE, PsbF, PsbH, PsbI, PsbJ, PsbK, PsbL, PsbM, PsbT, PsbX, PsbY, PsbZ, Psb30/Ycf12, peripheral proteins PsbO, CyanoQ (PsbQ), PsbU, PsbV and a large number of cofactors. It forms dimeric complexes. The D1/D2 heterodimer binds P680, chlorophylls that are the primary electron donor of PSII, and subsequent electron acceptors. It shares a non-heme iron and each subunit binds pheophytin, quinone, additional chlorophylls, carotenoids and lipids. D1 provides most of the ligands for the Mn4-Ca-O5 cluster of the oxygen-evolving complex (OEC). There is also a Cl(-1) ion associated with D1 and D2, which is required for oxygen evolution. The PSII complex binds additional chlorophylls, carotenoids and specific lipids. is required as a cofactor. Post-translationally, tyr-161 forms a radical intermediate that is referred to as redox-active TyrZ, YZ or Y-Z. C-terminally processed by CtpA; processing is essential to allow assembly of the oxygen-evolving complex and thus photosynthetic growth.

Its subcellular location is the cellular thylakoid membrane. The enzyme catalyses 2 a plastoquinone + 4 hnu + 2 H2O = 2 a plastoquinol + O2. Its function is as follows. Photosystem II (PSII) is a light-driven water:plastoquinone oxidoreductase that uses light energy to abstract electrons from H(2)O, generating O(2) and a proton gradient subsequently used for ATP formation. It consists of a core antenna complex that captures photons, and an electron transfer chain that converts photonic excitation into a charge separation. The D1/D2 (PsbA/PsbD) reaction center heterodimer binds P680, the primary electron donor of PSII as well as several subsequent electron acceptors. This chain is Photosystem II protein D1 2, found in Picosynechococcus sp. (strain ATCC 27264 / PCC 7002 / PR-6) (Agmenellum quadruplicatum).